Reading from the N-terminus, the 548-residue chain is CTL-like protein DDB_G0288717 (548 aa).

Positions 1 to 44 (MWAPEEDYKQPLLTNSRVANNGNNNNSNGRGGSSSPSTRLQPEH) are disordered. An N-linked (GlcNAc...) asparagine glycan is attached at N25. The chain crosses the membrane as a helical span at residues 52 to 72 (ILFTILFLLVIGGMAAISGIA). Residue N97 is glycosylated (N-linked (GlcNAc...) asparagine). 4 consecutive transmembrane segments (helical) span residues 125–145 (DILIYSVLLAIALGAAWIQLL), 151–171 (FFIYFTLCVGVALVATLGGLF), 184–204 (MIVGGCIIICTLVLVVVIVYL), and 226–246 (PSVFVIASLVVLFFIGFIAYW). N273 is a glycosylation site (N-linked (GlcNAc...) asparagine). 2 helical membrane-spanning segments follow: residues 290–310 (NLMYFMIFGFFWASSFISAVF) and 350–370 (FGSLAFGSLLIAFIEFMAFML). Residue N377 is glycosylated (N-linked (GlcNAc...) asparagine). Transmembrane regions (helical) follow at residues 381–401 (KLVVMVVSCLQCILGCIESIV), 442–462 (FIGGLVLLLGKILGSAASALF), and 479–499 (IALSAIFAFCIFNLFTHIVGI). Residue N544 is glycosylated (N-linked (GlcNAc...) asparagine).

This sequence belongs to the CTL (choline transporter-like) family.

The protein localises to the membrane. The chain is CTL-like protein DDB_G0288717 from Dictyostelium discoideum (Social amoeba).